Here is a 149-residue protein sequence, read N- to C-terminus: Large ribosomal subunit protein bL9 (149 aa).

This sequence belongs to the bacterial ribosomal protein bL9 family.

In terms of biological role, binds to the 23S rRNA. The protein is Large ribosomal subunit protein bL9 of Helicobacter pylori (strain P12).